The chain runs to 205 residues: Recombination protein RecR (205 aa).

Residues 58–75 (CSVCQNVTDRDADPCYIC) form a C4-type zinc finger. The region spanning 83–182 (SVICVVESPA…SVTKIARGIP (100 aa)) is the Toprim domain.

The protein belongs to the RecR family.

Its function is as follows. May play a role in DNA repair. It seems to be involved in an RecBC-independent recombinational process of DNA repair. It may act with RecF and RecO. This Chlorobium limicola (strain DSM 245 / NBRC 103803 / 6330) protein is Recombination protein RecR.